The following is a 135-amino-acid chain: MNNLSKNDFLKLYRNILRCHKILQEPMRSMGDQYVKTEWKLHKKATPKQAIQFYEQWNIYCNILLTQRDSILKENSNNNDNYNNNNNDNNNDNNNFINIGQDLNEKQMKSLNKKQIEQLDKLKSETSTVYTPSDK.

The interval 73–101 (KENSNNNDNYNNNNNDNNNDNNNFINIGQ) is disordered. Positions 75 to 95 (NSNNNDNYNNNNNDNNNDNNN) are enriched in low complexity.

It belongs to the complex I LYR family. SDHAF3 subfamily. In terms of assembly, interacts with the iron-sulfur protein subunit within the SDH catalytic dimer.

It localises to the mitochondrion matrix. Plays an essential role in the assembly of succinate dehydrogenase (SDH), an enzyme complex (also referred to as respiratory complex II) that is a component of both the tricarboxylic acid (TCA) cycle and the mitochondrial electron transport chain, and which couples the oxidation of succinate to fumarate with the reduction of ubiquinone (coenzyme Q) to ubiquinol. Promotes maturation of the iron-sulfur protein subunit of the SDH catalytic dimer, protecting it from the deleterious effects of oxidants. May act together with SDHAF1. The protein is Succinate dehydrogenase assembly factor 3, mitochondrial (acn9) of Dictyostelium discoideum (Social amoeba).